The chain runs to 236 residues: Eukaryotic translation initiation factor 3 subunit J (236 aa).

Positions 1–86 are disordered; it reads MADDWESAAD…KEEEEQKRLA (86 aa). Over residues 28–46 the composition is skewed to acidic residues; that stretch reads GEDDDEDVKESWEDEEEKK. 2 stretches are compositionally biased toward basic and acidic residues: residues 47–58 and 68–86; these read DEEKPTKTEAPV and AKLEEQERLKEEEEQKRLA. Residues 61–115 adopt a coiled-coil conformation; the sequence is KPNKALKAKLEEQERLKEEEEQKRLAEMTPEEKLAEKLRLQKIQEESDLKSALET.

Belongs to the eIF-3 subunit J family. Component of the eukaryotic translation initiation factor 3 (eIF-3) complex. The eIF-3 complex interacts with pix.

It localises to the cytoplasm. Its function is as follows. Component of the eukaryotic translation initiation factor 3 (eIF-3) complex, which is involved in protein synthesis of a specialized repertoire of mRNAs and, together with other initiation factors, stimulates binding of mRNA and methionyl-tRNAi to the 40S ribosome. The eIF-3 complex specifically targets and initiates translation of a subset of mRNAs involved in cell proliferation. This chain is Eukaryotic translation initiation factor 3 subunit J, found in Drosophila mojavensis (Fruit fly).